We begin with the raw amino-acid sequence, 713 residues long: TWiK family of potassium channels protein 12 (713 aa).

Over 1–15 the chain is Cytoplasmic; it reads MTLFKKIQWFCNLIR. The chain crosses the membrane as a helical span at residues 16-36; it reads LRSYYKFLLLIAYTAFGAWLF. Asn53, Asn77, and Asn98 each carry an N-linked (GlcNAc...) asparagine glycan. The pore-forming intramembrane region spans 112 to 132; that stretch reads WTWTGAMFYAGQLYTTIGYGY. A helical transmembrane segment spans residues 142–162; sequence ICTIFYALFGIPCFLMYLKIE. Residues 163-242 are Cytoplasmic-facing; it reads NAIEWKKDKQ…AEERKKKPFP (80 aa). A helical transmembrane segment spans residues 243–263; it reads IPIAIIMLIIWICFSASMFCI. Residues 267-287 constitute an intramembrane region (pore-forming); the sequence is TWVFSSAVYFFIVSISTVGLG. Residues 298–318 form a helical membrane-spanning segment; that stretch reads VFNFLLILVGLALLSMCFELI. The Cytoplasmic segment spans residues 319-713; that stretch reads TDRVAKWKQK…LSKRDASTMA (395 aa).

This sequence belongs to the two pore domain potassium channel (TC 1.A.1.8) family.

Its subcellular location is the membrane. This chain is TWiK family of potassium channels protein 12 (twk-12), found in Caenorhabditis elegans.